The primary structure comprises 416 residues: Phakinin (416 aa).

A disordered region spans residues 1 to 48 (MSERRVAMDLPSGSNASMPLQRHRVSSLRGTRSPSSLDSPPASRTSAV). The residue at position 2 (Ser2) is an N-acetylserine. The head stretch occupies residues 2-115 (SERRVAMDLP…HATAEDLGGC (114 aa)). 4 positions are modified to phosphoserine: Ser27, Ser33, Ser36, and Ser91. Residues 28–48 (LRGTRSPSSLDSPPASRTSAV) show a composition bias toward polar residues. Residues 105-416 (NHATAEDLGG…HALLDREESN (312 aa)) enclose the IF rod domain. 2 coiled-coil regions span residues 199-240 (FRKA…SLSR) and 314-391 (LAAA…ERAH). Residues 397 to 416 (GQLQKDVASYHALLDREESN) are tail.

Belongs to the intermediate filament family. As to quaternary structure, part of a complex required for lens intermediate filament formation composed of BFSP1, BFSP2, and CRYAA. Found in a complex composed of PPL (via C-terminal linker domain), BFSP1 and BFSP2 in the retinal lens. Within the complex interacts with PPL (via C-terminal linker domain) and with BFSP1. Identified in a complex that contains VIM, EZR, AHNAK, BFSP1, BFSP2, ANK2, PLEC, PRX and spectrin. Interacts with LGSN. Interacts with VIM. As to expression, expressed in the deep and shallow cortices of the retina lens (at protein level).

The protein resides in the cell membrane. The protein localises to the cytoplasm. Its subcellular location is the cytoskeleton. It is found in the cell cortex. Required for the correct formation of lens intermediate filaments as part of a complex composed of BFSP1, BFSP2 and CRYAA. Plays a role in maintenance of retinal lens optical clarity. In Rattus norvegicus (Rat), this protein is Phakinin.